Consider the following 328-residue polypeptide: uncharacterized protein (328 aa).

The H-T-H motif DNA-binding region spans 72–91 (ALQIRDKFNLQRVIIVPDGE).

This sequence belongs to the SorC transcriptional regulatory family.

This is an uncharacterized protein from Escherichia coli (strain K12).